The primary structure comprises 339 residues: uncharacterized protein (339 aa).

The protein to bacterial alkanal monooxygenase alpha and beta chains.

This is an uncharacterized protein from Bacillus subtilis (strain 168).